A 177-amino-acid polypeptide reads, in one-letter code: Anditomin synthesis protein L (177 aa).

Helical transmembrane passes span 54-74 (VVNS…PFIM) and 117-137 (IVNF…YMVF). The N-linked (GlcNAc...) asparagine glycan is linked to Asn-165.

It is found in the membrane. It functions in the pathway secondary metabolite biosynthesis; terpenoid biosynthesis. Functionally, part of the gene cluster that mediates the biosynthesis of anditomin, a fungal meroterpenoid. The first step of the pathway is the synthesis of 3,5-dimethylorsellinic acid (DMOA) by the polyketide synthase andM. DMOA is then converted to the phthalide compound 5,7-dihydroxy-4,6-dimethylphthalide (DHDMP) by the cytochrome P450 monooxygenase andK, which is further prenylated by the prenyltransferase andD to yield farnesyl-DHDMP. Further epoxidation by the FAD-dependent monooxygenase andE leads to epoxyfarnesyl-DHDMP. The next step involves the terpene cyclase andB that converts epoxyfarnesyl-DHDMP into preandiloid A through opening of the epoxide ring followed by the cyclization of the farnesyl moiety. Preandiloid A is in turn oxidized at the C-3 hydroxyl group to yield preandiloid B by the dehydrogenase andC. The dioxygenase andA is solely responsible for the dehydrogenation of preandiloid B leading to the enone preandiloid C, as well as for the intriguing structural rearrangement to generate the bicyclo[2.2.2]octane core, transforming preandiloid C into andiconin. FAD-binding monooxygenase andJ then produces andilesin D which is reduced by dehydrogenase andI to yield andilesin A. Action of acetyltransferase andG followed by a spontaneous acetate elimination leads then to andilesin B, which is in turn substrate of the short chain dehydrogenase andH to yield andilesin C. Finally, the dioxygenase andF catalyzes the transformation of andilesin C to anditomin. The exact role of andL within the anditomin biosynthetic pathway has not been identified yet. This is Anditomin synthesis protein L from Emericella variicolor (Aspergillus stellatus).